Consider the following 1244-residue polypeptide: MTVFLGIYRAVYAYEPQTPEELAIQEDDLLYLLQKSDIDDWWTVKKRVIGSDSEEPVGLVPSTYIEEAPVLKKVRAIYDYEQVQNADEELTFHENDVFDVFDDKDADWLLVKSTVSNEFGFIPGNYVEPENGSTSKQEQAPAAAEAPAATPAAAPASAAVLPTNFLPPPQHNDRARMMQSKEDQAPDEDEEGPPPAMPARPTATTETTDATAAAVRSRTRLSYSDNDNDDEEDDYYYNSNSNNVGNHEYNTEYHSWNVTEIEGRKKKKAKLSIGNNKINFIPQKGTPHEWSIDKLVSYDNEKKHMFLEFVDPYRSLELHTGNTTTCEEIMNIIGEYKGASRDPGLREVEMASKSKKRGIVQYDFMAESQDELTIKSGDKVYILDDKKSKDWWMCQLVDSGKSGLVPAQFIEPVRDKKHTESTASGIIKSIKKNFTKSPSRSRSRSRSKSNANASWKDDELQNDVVGSAAGKRSRKSSLSSHKKNSSATKDFPNPKKSRLWVDRSGTFKVDAEFIGCAKGKIHLHKANGVKIAVAADKLSNEDLAYVEKITGFSLEKFKANDGSSSRGTDSRDSERERRRRLKEQEEKERDRRLKERELYELKKARELLDEERSRLQEKELPPIKPPRPTSTTSVPNTTSVPPAESSNNNNSSNKYDWFEFFLNCGVDVSNCQRYTINFDREQLTEDMMPDINNSMLRTLGLREGDIVRVMKHLDKKFGRENIASIPTNATGNMFSQPDGSLNVATSPETSLPQQLLPQTTSPAQTAPSTSAETDDAWTVKPASKSESNLLSKKSEFTGSMQDLLDLQPLEPKKAAASTPEPNLKDLEPVKTGGTTVPAAPVSSAPVSSAPAPLDPFKTGGNNILPLSTGFVMMPMITGGDMLPMQRTGGFVVPQTTFGMQSQVTGGILPVQKTGNGLIPISNTGGAMMPQTTFGAAATVLPLQKTGGGLIPIATTGGAQFPQTSFNVQGQQQLPTGSILPVQKTANGLISANTGVSMPTVQRTGGTMIPQTSFGVSQQLTGGAMMTQPQNTGSAMMPQTSFNAVPQITGGAMMPQTSFNALPQVTGGAMMPLQRTGGALNTFNTGGAMIPQTSFSSQAQNTGGFRPQSQFGLTLQKTGGIAPLNQNQFTGGAMNTLSTGGVLQQQQPQTMNTFNTGGVMQELQMMTTFNTGGAMQQPQMMNTFNTDGIMQQPQMMNTFNTGGAMQQPQQQALQNQPTGFGFGNGPQQSRQANIFNATASNPFGF.

SH3 domains lie at 3 to 68 (VFLG…IEEA) and 69 to 132 (PVLK…PENG). Disordered regions lie at residues 128–248 (EPEN…GNHE) and 415–497 (DKKH…PKKS). The span at 140–159 (APAAAEAPAATPAAAPASAA) shows a compositional bias: low complexity. Over residues 171–184 (HNDRARMMQSKEDQ) the composition is skewed to basic and acidic residues. A compositionally biased stretch (low complexity) spans 199–214 (ARPTATTETTDATAAA). Residues 226 to 235 (NDNDDEEDDY) are compositionally biased toward acidic residues. The SH3 3 domain maps to 353-415 (KSKKRGIVQY…PAQFIEPVRD (63 aa)). The segment covering 429 to 447 (SIKKNFTKSPSRSRSRSRS) has biased composition (basic residues). A phosphoserine mark is found at Ser447, Ser449, and Ser454. Residues Lys471 and Lys548 each participate in a glycyl lysine isopeptide (Lys-Gly) (interchain with G-Cter in ubiquitin) cross-link. Residues 471–484 (KRSRKSSLSSHKKN) show a composition bias toward basic residues. 3 disordered regions span residues 558–592 (KAND…RDRR), 610–649 (EERS…SNNN), and 726–791 (PTNA…NLLS). Composition is skewed to basic and acidic residues over residues 568 to 592 (TDSR…RDRR) and 610 to 621 (EERSRLQEKELP). A compositionally biased stretch (low complexity) spans 629–649 (TSTTSVPNTTSVPPAESSNNN). The span at 726–756 (PTNATGNMFSQPDGSLNVATSPETSLPQQLL) shows a compositional bias: polar residues. Residues 757–771 (PQTTSPAQTAPSTSA) show a composition bias toward low complexity. Position 799 is a phosphoserine (Ser799). The disordered stretch occupies residues 813–853 (KAAASTPEPNLKDLEPVKTGGTTVPAAPVSSAPVSSAPAPL). Thr831 bears the Phosphothreonine mark. A compositionally biased stretch (low complexity) spans 836 to 851 (VPAAPVSSAPVSSAPA). At Thr858 the chain carries Phosphothreonine. 3 consecutive repeat copies span residues 868-874 (TGFVMMP), 877-883 (TGGDMLP), and 887-893 (TGGFVVP). The interval 868–1205 (TGFVMMPMIT…NTFNTGGAMQ (338 aa)) is 16 X 7 AA approximate repeats of T-G-G-A-M-M-P. 2 positions are modified to phosphothreonine: Thr887 and Thr904. Repeat copies occupy residues 923–929 (TGGAMMP) and 945–951 (TGGGLIP). 2 positions are modified to phosphothreonine: Thr984 and Thr993. Ser996 carries the phosphoserine modification. 5 repeat units span residues 1003–1009 (TGGTMIP), 1020–1026 (TGGAMMT), 1031–1037 (TGSAMMP), 1048–1054 (TGGAMMP), and 1065–1071 (TGGAMMP). Thr1075 bears the Phosphothreonine mark. A run of 6 repeats spans residues 1084 to 1090 (TGGAMIP), 1129 to 1135 (TGGAMNT), 1155 to 1161 (TGGVMQE), 1170 to 1176 (TGGAMQQ), 1185 to 1191 (TDGIMQQ), and 1200 to 1206 (TGGAMQQ).

It belongs to the SLA1 family. Component of the PAN1 actin cytoskeleton-regulatory complex. Interacts with ABP1, KRE6, LAS17, LSB5, RSP5, RVS167, VPS1 and YSC84. Phosphorylated by PRK1.

It localises to the nucleus. The protein resides in the cell membrane. It is found in the endosome membrane. Its subcellular location is the cytoplasm. The protein localises to the cytoskeleton. It localises to the actin patch. In terms of biological role, component of the PAN1 actin cytoskeleton-regulatory complex required for the internalization of endosomes during actin-coupled endocytosis. The complex links the site of endocytosis to the cell membrane-associated actin cytoskeleton. Mediates uptake of external molecules and vacuolar degradation of plasma membrane proteins. Plays a role in the proper organization of the cell membrane-associated actin cytoskeleton and promotes its destabilization. This Saccharomyces cerevisiae (strain ATCC 204508 / S288c) (Baker's yeast) protein is Actin cytoskeleton-regulatory complex protein SLA1 (SLA1).